The primary structure comprises 55 residues: Conotoxin Cal22b (55 aa).

The propeptide occupies 1–5 (GRPSA).

In terms of processing, contains 4 disulfide bonds. As to expression, expressed by the venom duct.

It localises to the secreted. In terms of biological role, probable neurotoxin with unknown target. Possibly targets ion channels. The polypeptide is Conotoxin Cal22b (Californiconus californicus (California cone)).